Reading from the N-terminus, the 249-residue chain is tRNA (guanine-N(1)-)-methyltransferase (249 aa).

S-adenosyl-L-methionine-binding positions include glycine 121 and 141–146; that span reads LGDFVL.

The protein belongs to the RNA methyltransferase TrmD family. In terms of assembly, homodimer.

It is found in the cytoplasm. It carries out the reaction guanosine(37) in tRNA + S-adenosyl-L-methionine = N(1)-methylguanosine(37) in tRNA + S-adenosyl-L-homocysteine + H(+). Functionally, specifically methylates guanosine-37 in various tRNAs. This chain is tRNA (guanine-N(1)-)-methyltransferase, found in Cereibacter sphaeroides (strain ATCC 17023 / DSM 158 / JCM 6121 / CCUG 31486 / LMG 2827 / NBRC 12203 / NCIMB 8253 / ATH 2.4.1.) (Rhodobacter sphaeroides).